The chain runs to 177 residues: Large ribosomal subunit protein uL6 (177 aa).

This sequence belongs to the universal ribosomal protein uL6 family. In terms of assembly, part of the 50S ribosomal subunit.

This protein binds to the 23S rRNA, and is important in its secondary structure. It is located near the subunit interface in the base of the L7/L12 stalk, and near the tRNA binding site of the peptidyltransferase center. This Acidovorax ebreus (strain TPSY) (Diaphorobacter sp. (strain TPSY)) protein is Large ribosomal subunit protein uL6.